The sequence spans 625 residues: Cysteine-rich receptor-like protein kinase 46 (625 aa).

Residues 1 to 23 (MASTLISSLAVVLPLTLLAPSMS) form the signal peptide. Residues 24-252 (MKISRIDVLG…LLAMSFTKEN (229 aa)) lie on the Extracellular side of the membrane. Gnk2-homologous domains lie at 29–130 (IDVL…NYSF) and 135–237 (VSHQ…NYTF). Asparagine 38, asparagine 127, asparagine 234, and asparagine 252 each carry an N-linked (GlcNAc...) asparagine glycan. A helical membrane pass occupies residues 253–273 (LTYIFVISMVGVLAIAAGFWC). Topologically, residues 274–625 (GKCFYMRTSP…TKPPFLHDSM (352 aa)) are cytoplasmic. The region spanning 331 to 621 (FNESCKLGVG…LPTPTKPPFL (291 aa)) is the Protein kinase domain. ATP is bound by residues 337–345 (LGVGGYGEV) and lysine 359. Position 404 is a phosphotyrosine (tyrosine 404). The Proton acceptor role is filled by aspartate 454. Serine 458 is modified (phosphoserine). Threonine 499 carries the phosphothreonine modification. Tyrosine 507 carries the phosphotyrosine modification.

It belongs to the protein kinase superfamily. Ser/Thr protein kinase family. CRK subfamily.

The protein resides in the membrane. It carries out the reaction L-seryl-[protein] + ATP = O-phospho-L-seryl-[protein] + ADP + H(+). It catalyses the reaction L-threonyl-[protein] + ATP = O-phospho-L-threonyl-[protein] + ADP + H(+). In Arabidopsis thaliana (Mouse-ear cress), this protein is Cysteine-rich receptor-like protein kinase 46.